The chain runs to 485 residues: Noelin (485 aa).

An N-terminal signal peptide occupies residues 1–16 (MSVPLLKIGVVLSTMA). 8 N-linked (GlcNAc...) asparagine glycosylation sites follow: Asn33, Asn103, Asn187, Asn288, Asn307, Asn394, Asn431, and Asn473. Positions 87 to 225 (RDARTKQLRQ…ERLRACMQKL (139 aa)) form a coiled coil. The region spanning 226 to 478 (ACGKLTGISD…QILYNVTLFH (253 aa)) is the Olfactomedin-like domain. Cys227 and Cys409 form a disulfide bridge.

As to quaternary structure, homotetramer; disulfide-linked. Dimer of dimers, giving rise to a V-shaped homotretramer. Isoform 1 and isoform 3 interact with RTN4R. Identified in a complex with RTN4R and LINGO1. Peripherally associated with AMPAR complex. AMPAR complex consists of an inner core made of 4 pore-forming GluA/GRIA proteins (GRIA1, GRIA2, GRIA3 and GRIA4) and 4 major auxiliary subunits arranged in a twofold symmetry. One of the two pairs of distinct binding sites is occupied either by CNIH2, CNIH3 or CACNG2, CACNG3. The other harbors CACNG2, CACNG3, CACNG4, CACNG8 or GSG1L. This inner core of AMPAR complex is complemented by outer core constituents binding directly to the GluA/GRIA proteins at sites distinct from the interaction sites of the inner core constituents. Outer core constituents include at least PRRT1, PRRT2, CKAMP44/SHISA9, FRRS1L and NRN1. The proteins of the inner and outer core serve as a platform for other, more peripherally associated AMPAR constituents, including OLFM1. Alone or in combination, these auxiliary subunits control the gating and pharmacology of the AMPAR complex and profoundly impact their biogenesis and protein processing. Interacts with OLFM2.

It localises to the secreted. It is found in the synapse. The protein localises to the endoplasmic reticulum. The protein resides in the cell projection. Its subcellular location is the axon. It localises to the perikaryon. Contributes to the regulation of axonal growth in the embryonic and adult central nervous system by inhibiting interactions between RTN4R and LINGO1. Inhibits RTN4R-mediated axon growth cone collapse. May play an important role in regulating the production of neural crest cells by the neural tube. May be required for normal responses to olfactory stimuli. This Homo sapiens (Human) protein is Noelin (OLFM1).